A 226-amino-acid polypeptide reads, in one-letter code: Triosephosphate isomerase (226 aa).

12–14 (NFK) is a binding site for substrate. His-96 acts as the Electrophile in catalysis. Glu-144 acts as the Proton acceptor in catalysis. Substrate-binding positions include Ile-149, Gly-184, and 205–206 (AS).

This sequence belongs to the triosephosphate isomerase family. In terms of assembly, homotetramer; dimer of dimers.

It is found in the cytoplasm. It catalyses the reaction D-glyceraldehyde 3-phosphate = dihydroxyacetone phosphate. Its pathway is carbohydrate biosynthesis; gluconeogenesis. The protein operates within carbohydrate degradation; glycolysis; D-glyceraldehyde 3-phosphate from glycerone phosphate: step 1/1. In terms of biological role, involved in the gluconeogenesis. Catalyzes stereospecifically the conversion of dihydroxyacetone phosphate (DHAP) to D-glyceraldehyde-3-phosphate (G3P). The sequence is that of Triosephosphate isomerase from Thermococcus kodakarensis (strain ATCC BAA-918 / JCM 12380 / KOD1) (Pyrococcus kodakaraensis (strain KOD1)).